The following is a 192-amino-acid chain: uncharacterized protein (192 aa).

This is an uncharacterized protein from Acidianus convivator (ATV).